Reading from the N-terminus, the 257-residue chain is Ciliary microtubule associated protein 1B (257 aa).

3 STPGR repeats span residues 103–129 (PGPGSYSPENATKATYLSPPAFTLSAR), 182–207 (PGPGTYQVVDPCVYKHKGPQYSMTGR), and 218–243 (PGPGAHYPEMVCFTRAKAPSFSFGIR).

Belongs to the CIMAP family.

The protein localises to the cell projection. It localises to the cilium. It is found in the flagellum. This chain is Ciliary microtubule associated protein 1B (cimap1b), found in Danio rerio (Zebrafish).